Here is a 308-residue protein sequence, read N- to C-terminus: HTH-type transcriptional activator AllS (308 aa).

The region spanning 2–59 is the HTH lysR-type domain; sequence FDPETLRTFISVAETGSFSKAAERLCKTTATISYRIKLLEENTGVGLFFRTTRSVSLT. Positions 19–38 form a DNA-binding region, H-T-H motif; the sequence is FSKAAERLCKTTATISYRIK.

Belongs to the LysR transcriptional regulatory family.

In terms of biological role, positive regulator essential for the expression of allD operon. Binds to the allD promoter. The chain is HTH-type transcriptional activator AllS (allS) from Salmonella paratyphi A (strain ATCC 9150 / SARB42).